We begin with the raw amino-acid sequence, 230 residues long: 5'-methylthioadenosine/S-adenosylhomocysteine nucleosidase (230 aa).

Glu12 functions as the Proton acceptor in the catalytic mechanism. Substrate is bound by residues Gly78, Ile153, and 174-175 (ME). The active-site Proton donor is the Asp198.

It belongs to the PNP/UDP phosphorylase family. MtnN subfamily.

It catalyses the reaction S-adenosyl-L-homocysteine + H2O = S-(5-deoxy-D-ribos-5-yl)-L-homocysteine + adenine. The catalysed reaction is S-methyl-5'-thioadenosine + H2O = 5-(methylsulfanyl)-D-ribose + adenine. It carries out the reaction 5'-deoxyadenosine + H2O = 5-deoxy-D-ribose + adenine. Its pathway is amino-acid biosynthesis; L-methionine biosynthesis via salvage pathway; S-methyl-5-thio-alpha-D-ribose 1-phosphate from S-methyl-5'-thioadenosine (hydrolase route): step 1/2. Catalyzes the irreversible cleavage of the glycosidic bond in both 5'-methylthioadenosine (MTA) and S-adenosylhomocysteine (SAH/AdoHcy) to adenine and the corresponding thioribose, 5'-methylthioribose and S-ribosylhomocysteine, respectively. Also cleaves 5'-deoxyadenosine, a toxic by-product of radical S-adenosylmethionine (SAM) enzymes, into 5-deoxyribose and adenine. In Shewanella piezotolerans (strain WP3 / JCM 13877), this protein is 5'-methylthioadenosine/S-adenosylhomocysteine nucleosidase.